Consider the following 428-residue polypeptide: Cell division cycle 20.6, cofactor of APC complex (428 aa).

WD repeat units follow at residues 106 to 145, 150 to 189, 193 to 230, 234 to 273, 282 to 324, 326 to 367, and 370 to 409; these read WFLT…TSKL, DENG…HVRT, GHES…SIIG, GHTE…SNPT, EHTA…CLNS, ETGS…KMAE, and GHTS…PKTT.

This sequence belongs to the WD repeat CDC20/Fizzy family. In terms of assembly, the APC/C is composed of at least 11 subunits that stay tightly associated throughout the cell cycle.

The protein resides in the nucleus. It functions in the pathway protein modification; protein ubiquitination. Its function is as follows. Component of the anaphase promoting complex/cyclosome (APC/C), a cell cycle-regulated E3 ubiquitin-protein ligase complex that controls progression through mitosis and the G1 phase of the cell cycle. The sequence is that of Cell division cycle 20.6, cofactor of APC complex (CDC20-6) from Arabidopsis thaliana (Mouse-ear cress).